Here is a 134-residue protein sequence, read N- to C-terminus: Ribonuclease VapC11 (134 aa).

The 125-residue stretch at 2–126 (ILIDTSAWVE…ADFDVIARIT (125 aa)) folds into the PINc domain. Mg(2+) is bound by residues aspartate 5 and aspartate 98.

This sequence belongs to the PINc/VapC protein family. The cofactor is Mg(2+).

Functionally, toxic component of a type II toxin-antitoxin (TA) system. Acts as an RNase. Its toxic effects on cell growth and colony formation are neutralized by coexpression with cognate antitoxin VapB11. The polypeptide is Ribonuclease VapC11 (Mycobacterium tuberculosis (strain CDC 1551 / Oshkosh)).